Here is a 278-residue protein sequence, read N- to C-terminus: Ribosomal RNA small subunit methyltransferase A (278 aa).

The S-adenosyl-L-methionine site is built by N27, L29, G54, E75, D101, and N120.

Belongs to the class I-like SAM-binding methyltransferase superfamily. rRNA adenine N(6)-methyltransferase family. RsmA subfamily.

The protein resides in the cytoplasm. It catalyses the reaction adenosine(1518)/adenosine(1519) in 16S rRNA + 4 S-adenosyl-L-methionine = N(6)-dimethyladenosine(1518)/N(6)-dimethyladenosine(1519) in 16S rRNA + 4 S-adenosyl-L-homocysteine + 4 H(+). Its function is as follows. Specifically dimethylates two adjacent adenosines (A1518 and A1519) in the loop of a conserved hairpin near the 3'-end of 16S rRNA in the 30S particle. May play a critical role in biogenesis of 30S subunits. The sequence is that of Ribosomal RNA small subunit methyltransferase A from Zymomonas mobilis subsp. mobilis (strain ATCC 31821 / ZM4 / CP4).